The following is a 316-amino-acid chain: Probable prolyl 4-hydroxylase 7 (316 aa).

Residues 1–4 are Cytoplasmic-facing; that stretch reads MDSR. A helical; Signal-anchor for type II membrane protein transmembrane segment spans residues 5–24; the sequence is IFLAFSLCFLFTLPLISSAP. The Lumenal segment spans residues 25 to 316; sequence NRFLTRSSNT…CRKSCKACSS (292 aa). Asn96 carries N-linked (GlcNAc...) asparagine glycosylation. One can recognise a Fe2OG dioxygenase domain in the interval 139–261; sequence NGESMQILHY…KWSATRWIHV (123 aa). Residues His157 and Asp159 each contribute to the Fe cation site. Asn233 is a glycosylation site (N-linked (GlcNAc...) asparagine). Residue His242 coordinates Fe cation. Position 252 (Lys252) interacts with 2-oxoglutarate. Residues 274–314 enclose the ShKT domain; sequence CMDENVSCEKWAKAGECQKNPTYMVGSDKDHGYCRKSCKAC. 3 cysteine pairs are disulfide-bonded: Cys274–Cys314, Cys281–Cys307, and Cys290–Cys311. The N-linked (GlcNAc...) asparagine glycan is linked to Asn278.

Belongs to the P4HA family. The cofactor is Fe(2+). Requires L-ascorbate as cofactor.

It localises to the endoplasmic reticulum membrane. The enzyme catalyses L-prolyl-[collagen] + 2-oxoglutarate + O2 = trans-4-hydroxy-L-prolyl-[collagen] + succinate + CO2. In terms of biological role, catalyzes the post-translational formation of 4-hydroxyproline in -Xaa-Pro-Gly- sequences in proline-rich peptide sequences of plant glycoproteins and other proteins. Hydroxyprolines are important constituent of many plant cell wall glycoproteins such as extensins, hydroxyproline-rich glycoproteins, lectins and arabinogalactan proteins. This Arabidopsis thaliana (Mouse-ear cress) protein is Probable prolyl 4-hydroxylase 7.